The sequence spans 400 residues: Delta(12) fatty acid desaturase (400 aa).

A helical transmembrane segment spans residues 91 to 111 (LAWPAYWIMQGIVCTGIWVLA). Residues 112–116 (HECGH) carry the Histidine box-1 motif. The Histidine box-2 motif lies at 148-152 (HSKHH). A run of 3 helical transmembrane segments spans residues 199–219 (IVTLFWMVIQFLFGWPAYLIM), 245–265 (FFDIIISDLGVLAALGALIYA), and 277–297 (YYIVPYLFVNFWLVLITFLQH). Residues 339 to 343 (HVAHH) carry the Histidine box-3 motif.

The protein belongs to the fatty acid desaturase type 1 family.

The protein resides in the membrane. It catalyses the reaction (9Z)-octadecenoyl-CoA + 2 Fe(II)-[cytochrome b5] + O2 + 2 H(+) = (9Z,12Z)-octadecadienoyl-CoA + 2 Fe(III)-[cytochrome b5] + 2 H2O. It carries out the reaction (9Z)-hexadecenoyl-CoA + 2 Fe(II)-[cytochrome b5] + O2 + 2 H(+) = (9Z,12Z)-hexadecadienoyl-CoA + 2 Fe(III)-[cytochrome b5] + 2 H2O. It functions in the pathway lipid metabolism; polyunsaturated fatty acid biosynthesis. Its function is as follows. Catalyzes the desaturation of oleic acid (Delta(9)-18:1) to linoleic acid (Delta(9), Delta(12)-18:2). In Mortierella alpina (Oleaginous fungus), this protein is Delta(12) fatty acid desaturase.